Reading from the N-terminus, the 249-residue chain is Probable transcriptional regulatory protein Tfu_2096 (249 aa).

The protein belongs to the TACO1 family.

Its subcellular location is the cytoplasm. The chain is Probable transcriptional regulatory protein Tfu_2096 from Thermobifida fusca (strain YX).